The sequence spans 215 residues: Nucleoredoxin-like protein 1 (215 aa).

A Thioredoxin; atypical domain is found at Met-1–Leu-165. A compositionally biased stretch (basic and acidic residues) spans Ile-185–Glu-194. Residues Ile-185–Phe-215 form a disordered region.

This sequence belongs to the nucleoredoxin family.

Its subcellular location is the cell projection. The protein localises to the cilium. It is found in the photoreceptor outer segment. Functionally, plays an important role in retinal cone photoreceptor survival. May play a role in cone cell viability, slowing down cone degeneration, does not seem to play a role in degenerating rods. In Xenopus laevis (African clawed frog), this protein is Nucleoredoxin-like protein 1 (nxnl1).